Consider the following 259-residue polypeptide: Peroxisomal membrane protein 11B (259 aa).

Lys-43 carries the N6-acetyllysine modification. Residues 157–176 are disordered; it reads LKGSGGGVPGGSETGGLGGP. Residues 159-176 are compositionally biased toward gly residues; that stretch reads GSGGGVPGGSETGGLGGP. An interaction with PEX19, PEX11G and FIS1 and peroxisome targeting region spans residues 211–259; sequence VVRNACDLFIPLDKLGLWRCGPGIVGLCGLVSSILSILTLIYPWLRLKP. A helical membrane pass occupies residues 233-255; the sequence is GIVGLCGLVSSILSILTLIYPWL.

This sequence belongs to the peroxin-11 family. In terms of assembly, homodimer. Heterodimer with PEX11G. Interacts with PEX19. Interacts with FIS1.

The protein localises to the peroxisome membrane. In terms of biological role, involved in peroxisomal proliferation. May regulate peroxisome division by recruiting the dynamin-related GTPase DNM1L to the peroxisomal membrane. Promotes membrane protrusion and elongation on the peroxisomal surface. The polypeptide is Peroxisomal membrane protein 11B (PEX11B) (Homo sapiens (Human)).